A 376-amino-acid polypeptide reads, in one-letter code: Protein-arginine rhamnosyltransferase (376 aa).

Residues 13–16, Tyr-192, 252–254, and 270–274 contribute to the dTDP-beta-L-rhamnose site; these read NYGD, MAQ, and RGEDS. 14-15 provides a ligand contact to dTDP; sequence YG. Catalysis depends on Asp-16, which acts as the Proton acceptor. DTDP is bound by residues Tyr-192, 252 to 254, and 270 to 274; these read MAQ and RGEDS. The active site involves Glu-272.

Belongs to the glycosyltransferase 104 family.

It carries out the reaction dTDP-beta-L-rhamnose + L-arginyl-[protein] = N(omega)-(alpha-L-rhamnosyl)-L-arginyl-[protein] + dTDP + H(+). Protein-arginine rhamnosyltransferase that catalyzes the transfer of a single rhamnose to elongation factor P (EF-P) on 'Lys-32', a modification required for EF-P-dependent rescue of polyproline stalled ribosomes. The polypeptide is Protein-arginine rhamnosyltransferase (Pseudomonas aeruginosa (strain ATCC 15692 / DSM 22644 / CIP 104116 / JCM 14847 / LMG 12228 / 1C / PRS 101 / PAO1)).